Reading from the N-terminus, the 156-residue chain is Small ribosomal subunit protein uS7 (156 aa).

The protein belongs to the universal ribosomal protein uS7 family. In terms of assembly, part of the 30S ribosomal subunit. Contacts proteins S9 and S11.

Its function is as follows. One of the primary rRNA binding proteins, it binds directly to 16S rRNA where it nucleates assembly of the head domain of the 30S subunit. Is located at the subunit interface close to the decoding center, probably blocks exit of the E-site tRNA. The chain is Small ribosomal subunit protein uS7 from Rhodococcus erythropolis (strain PR4 / NBRC 100887).